We begin with the raw amino-acid sequence, 100 residues long: Large ribosomal subunit protein bL21 (100 aa).

This sequence belongs to the bacterial ribosomal protein bL21 family. As to quaternary structure, part of the 50S ribosomal subunit. Contacts protein L20.

This protein binds to 23S rRNA in the presence of protein L20. In Ureaplasma parvum serovar 3 (strain ATCC 27815 / 27 / NCTC 11736), this protein is Large ribosomal subunit protein bL21.